Consider the following 440-residue polypeptide: Endoplasmic reticulum junction formation protein lunapark (440 aa).

The Cytoplasmic portion of the chain corresponds to 1–45 (MGALLAKWRAKPSTVEVLEKMEKDIQSLEEFRDKNQKLRKIWVAR). Residues 16 to 40 (EVLEKMEKDIQSLEEFRDKNQKLRK) are a coiled coil. The chain crosses the membrane as a helical span at residues 46–66 (LFFYSTILYILTSLTVYLWYL). Topologically, residues 67–77 (PGGMTARLLTT) are lumenal. The helical transmembrane segment at 78–98 (LLFLLFPVLIWFVRTLLILWF) threads the bilayer. Residues 99–440 (SRRTERNNDA…ESEESFMETE (342 aa)) are Cytoplasmic-facing. Residues 100–128 (RRTERNNDALELLKAEKKKILEEVMEKET) adopt a coiled-coil conformation. The segment at 149-169 (LELPVPGPPITPRPGQDLRQR) is disordered. Phosphothreonine is present on threonine 159. Phosphoserine is present on residues serine 177, serine 179, serine 188, and serine 192. Threonine 198 carries the phosphothreonine modification. The interval 202–247 (QRDTSAPGGPPERSVQPTPQSNILQRRPGSPATAVSGMALHPPGPP) is disordered. 2 positions are modified to phosphoserine: serine 206 and serine 215. Over residues 216 to 225 (VQPTPQSNIL) the composition is skewed to polar residues. Residue threonine 219 is modified to Phosphothreonine. Residues serine 222 and serine 231 each carry the phosphoserine modification. The segment at 280–305 (CQQCFSHNGMALKEEFEYVAFRCAYC) adopts a C4-type; plays a role in ER morphology zinc-finger fold. A disordered region spans residues 316-440 (PQAPRLQEIS…ESEESFMETE (125 aa)). Position 325 is a phosphoserine (serine 325). Residues 334-343 (DSQGSVNTLQ) are compositionally biased toward polar residues. Acidic residues-rich tracts occupy residues 370–411 (QAIE…DDTE) and 431–440 (ESEESFMETE).

Belongs to the lunapark family. As to quaternary structure, homodimer; homodimerization requires the C4-type zinc finger motif and decreases during mitosis in a phosphorylation-dependent manner. In terms of processing, phosphorylated. Phosphorylation at Thr-159 and Ser-325 occurs during interphase. Phosphorylation at Ser-177, Ser-179, Ser-188, Ser-192, Thr-198, Ser-206, Ser-215, Thr-219, Ser-222 and Ser-231 occurs during mitosis; these phosphorylations reduce both its homodimerization and the ER three-way tubular junction formation.

Its subcellular location is the endoplasmic reticulum membrane. Functionally, endoplasmic reticulum (ER)-shaping membrane protein that plays a role in determining ER morphology. Involved in the stabilization of nascent three-way ER tubular junctions within the ER network. May also play a role as a curvature-stabilizing protein within three-way ER tubular junction network. In Xenopus laevis (African clawed frog), this protein is Endoplasmic reticulum junction formation protein lunapark (lnpk).